The sequence spans 207 residues: Small ribosomal subunit protein uS4 (207 aa).

The tract at residues 31-55 (KCKLDSKPGQHGRTSGARTSDYGTQ) is disordered. The span at 42–53 (GRTSGARTSDYG) shows a compositional bias: polar residues. Residues 97–160 (SRLDNVVYRM…KKQARILEAL (64 aa)) enclose the S4 RNA-binding domain.

This sequence belongs to the universal ribosomal protein uS4 family. As to quaternary structure, part of the 30S ribosomal subunit. Contacts protein S5. The interaction surface between S4 and S5 is involved in control of translational fidelity.

Its function is as follows. One of the primary rRNA binding proteins, it binds directly to 16S rRNA where it nucleates assembly of the body of the 30S subunit. In terms of biological role, with S5 and S12 plays an important role in translational accuracy. The polypeptide is Small ribosomal subunit protein uS4 (Paraburkholderia phymatum (strain DSM 17167 / CIP 108236 / LMG 21445 / STM815) (Burkholderia phymatum)).